A 158-amino-acid polypeptide reads, in one-letter code: Lipoprotein signal peptidase (158 aa).

3 helical membrane-spanning segments follow: residues 12–32 (LFWW…AWIV), 46–66 (IIPG…FSLF), and 71–91 (IWLR…AILG). Residues aspartate 124 and aspartate 140 contribute to the active site. Residues 135-155 (VFNVADIAINIGIVCLLWSAW) traverse the membrane as a helical segment.

This sequence belongs to the peptidase A8 family.

The protein localises to the cell inner membrane. The catalysed reaction is Release of signal peptides from bacterial membrane prolipoproteins. Hydrolyzes -Xaa-Yaa-Zaa-|-(S,diacylglyceryl)Cys-, in which Xaa is hydrophobic (preferably Leu), and Yaa (Ala or Ser) and Zaa (Gly or Ala) have small, neutral side chains.. The protein operates within protein modification; lipoprotein biosynthesis (signal peptide cleavage). In terms of biological role, this protein specifically catalyzes the removal of signal peptides from prolipoproteins. The chain is Lipoprotein signal peptidase from Thermosynechococcus vestitus (strain NIES-2133 / IAM M-273 / BP-1).